We begin with the raw amino-acid sequence, 234 residues long: MNIDAIAVDIDGTITDNKRRLCYSAMEAIRKAEDAGVPTIIVTGNIVTYAYATLVLLGASGGVVGENGGVIFKENYNNNQIKTVVDRTYVNAADKHLKERLGSKFDKNISNDNMYRLTESVFYKTITKKELEEGLKGFEYLDKIELYDSGFALHVTDKRVNKGSSLKYLCNENGIDMENVMAMGDSENDEAFLKEAGMKVAVGNAEDFLKKNSDYVCKNNYGDGVKEAIEKFVL.

D9 (nucleophile) is an active-site residue. Positions 9 and 11 each coordinate Mg(2+). Residue K162 coordinates substrate. Mg(2+) is bound by residues D185 and D189.

The protein belongs to the archaeal SPP-like hydrolase family. The cofactor is Mg(2+).

The enzyme catalyses 2-phosphoglycolate + H2O = glycolate + phosphate. Catalyzes the dephosphorylation of 2-phosphoglycolate. The protein is Phosphoglycolate phosphatase of Methanobrevibacter smithii (strain ATCC 35061 / DSM 861 / OCM 144 / PS).